The following is a 1261-amino-acid chain: MEERARSRLLRSKATLEQDIKASYLMDHMISDGVLTNDEEAKVLSKATRKEQAVALLETLLRKDNRAYISFYNALIRESYGDLASLLHSDLPLLSPEGEKSFADGVSPSVQAILSVGGVPQRPVVFVSRPPLLNLIREMLYQLRDTPGWVTVFGMAGSGKSVMAAEVVRDRSLIKECFPDGVHWLSVGQCERADLLVRMQSLCFRLEQCQSSDTSQRPPSTVEEAKERLRFLMLRRFPRSLLILDDVWDSSSLRSFDIQCRVLLTTRNRALTDSVSGVRYEVPVENGLDEEKALEILALYVNGKMHKLPEQARSIVSECKGSPLVVSLIGALLREFPDRWSYYLRQLQQKQFKRIRKSSSYDYEALDQAMDASLQVLEAEHQELYRDLSVMQKDIKVPAKVLSVLWGLELEEVEDVLQEFVNKSLLFRDCNQRPYRYYLHDLQLDFLAEQNRDQIAELHKKMVRQYQRFYSKRPPDSADKDSLYWYQFIPYHMAKAGLSKELYSLMFSLDWVKEKARIMGSAHLINDYVEYGEILDKENSEVRVQFQEFLSLNGHHLEQRPFPDVVQLALSQPDRSEVYRQALMQAQKRASRGQIYLNWVNKNIEEGLSRLVMHPHQGAVYYACFSKDGSKIASCGASKALRVFKSTSGEKLLELQAHEEDVLCCAFSPDDRHIATCASDRKVKLWNVERGVLIREFEVEHEEQINHCQFTNTGRRVLLATCSNDKFTNTRLWNPNKKTSQNTMFGHMEPVNHCCFSPNDLYLATSSSDGSLKLFEVSSANEWKSIDVDSFFPESDEEIKAMVKCSTWSADGSQIICAARNTVFVFDVETSDLLLKLKTSRLSTIQFCHACPNSSLLAVALSHYTVELWNFESSKKKAECSGHLSWVHCVQFSPDGSLLLSSSDDQTIRLWETDRVHTSSAVALKRDTDVLSSHSDATIIAPDSSNRLQVLSGSTGAVVLESEELSSRIRCSCISRNAAFVALGSEDGTVQVIEVPSSKASVKLSGHTKTVHHCQFTDDCEILITSSEDSTIRVWKWRTGECMVLQGHMEPVRKFHLLSSSSSPHLFSWSFDGTVKVWDLTRGQMLQDLVCHEGAVLSCDVSSDGRLFATTSANRTAKVWSSASWKMLFLLEGHKDCVRSCRFSWDNKRLATGDDNGEIRLWSMLDGALLKICPRDTKDSMNSYHAGWVTDLHFSPDNRVLVSTAGYIKWWSVESGEALQTFYTMGGNLKKIHVSPDFSTFITVDSIGILYILKRLEGEGT.

The CARD domain occupies 1-90; sequence MEERARSRLL…GDLASLLHSD (90 aa). Residues 106–417 form the NB-ARC domain; the sequence is VSPSVQAILS…LELEEVEDVL (312 aa). ATP is bound at residue 154 to 161; sequence GMAGSGKS. 13 WD repeats span residues 615–654, 657–696, 700–743, 746–785, 798–836, 840–879, 882–921, 964–1003, 1006–1045, 1047–1088, 1091–1130, 1133–1172, and 1184–1223; these read PHQG…KLLE, AHEE…LIRE, EHEE…SQNT, GHME…EWKS, EIKA…LLLK, SRLS…KKAE, GHLS…TSSA, ELSS…ASVK, GHTK…CMVL, GHME…MLQD, CHEG…MLFL, GHKD…LLKI, and YHAG…QTFY.

In terms of assembly, monomer. Oligomerizes upon binding of cytochrome c and dATP.

It is found in the cytoplasm. Oligomeric Apaf-1 mediates the cytochrome c-dependent autocatalytic activation of pro-caspase-9 (Apaf-3), leading to the activation of caspase-3 and apoptosis. This activation requires ATP. This Danio rerio (Zebrafish) protein is Apoptotic protease-activating factor 1 (apaf1).